The primary structure comprises 1080 residues: Putative bifunctional amine oxidase DDB_G0291301 (1080 aa).

A putative sarcosine oxidase region spans residues 1-450 (MREFLKDDYD…TIAKSTVPTN (450 aa)). 10 to 40 (DVIVCGGGPVGLATAYRCAKAGKKVLCLEKS) contributes to the FAD binding site. The interval 445-464 (STVPTNQSSNPDGASSTAPT) is disordered. A putative L-amino-acid oxidase region spans residues 450-1080 (NQSSNPDGAS…NTAASIGGLK (631 aa)). A helical membrane pass occupies residues 508–528 (VGIIGAGMAGLYAAMILQDLG). FAD is bound by residues Glu535, Arg544, and 563–564 (GA). Position 886 (Tyr886) interacts with substrate. FAD is bound by residues Glu978 and 987–990 (VIGS).

This sequence in the N-terminal section; belongs to the MSOX/MTOX family. It in the C-terminal section; belongs to the flavin monoamine oxidase family. The cofactor is FAD.

Its subcellular location is the membrane. It carries out the reaction sarcosine + O2 + H2O = formaldehyde + glycine + H2O2. The catalysed reaction is L-pipecolate + O2 = L-1-piperideine-6-carboxylate + H2O2 + H(+). The enzyme catalyses an L-alpha-amino acid + O2 + H2O = a 2-oxocarboxylate + H2O2 + NH4(+). Functionally, catalyzes an oxidative deamination of predominantly hydrophobic and aromatic L-amino acids. Metabolizes sarcosine, L-pipecolic acid and L-proline. This is Putative bifunctional amine oxidase DDB_G0291301 from Dictyostelium discoideum (Social amoeba).